Consider the following 408-residue polypeptide: Dual-specificity RNA methyltransferase RlmN (408 aa).

Residue Glu93 is the Proton acceptor of the active site. The 281-residue stretch at 99–379 (ETNRGTLCIS…TTTRKTRGDD (281 aa)) folds into the Radical SAM core domain. Cys106 and Cys384 are joined by a disulfide. Cys113, Cys117, and Cys120 together coordinate [4Fe-4S] cluster. A disordered region spans residues 152–196 (SPAGSKDGDGGPDHASRATKLDHRAADAKGVQSDSWRSSDPEEDH). Residues 157-178 (KDGDGGPDHASRATKLDHRAAD) show a composition bias toward basic and acidic residues. Residues 210–211 (GE), Ser242, 264–266 (SLH), and Asn341 each bind S-adenosyl-L-methionine. Cys384 (S-methylcysteine intermediate) is an active-site residue.

The protein belongs to the radical SAM superfamily. RlmN family. It depends on [4Fe-4S] cluster as a cofactor.

The protein resides in the cytoplasm. It carries out the reaction adenosine(2503) in 23S rRNA + 2 reduced [2Fe-2S]-[ferredoxin] + 2 S-adenosyl-L-methionine = 2-methyladenosine(2503) in 23S rRNA + 5'-deoxyadenosine + L-methionine + 2 oxidized [2Fe-2S]-[ferredoxin] + S-adenosyl-L-homocysteine. The enzyme catalyses adenosine(37) in tRNA + 2 reduced [2Fe-2S]-[ferredoxin] + 2 S-adenosyl-L-methionine = 2-methyladenosine(37) in tRNA + 5'-deoxyadenosine + L-methionine + 2 oxidized [2Fe-2S]-[ferredoxin] + S-adenosyl-L-homocysteine. Functionally, specifically methylates position 2 of adenine 2503 in 23S rRNA and position 2 of adenine 37 in tRNAs. m2A2503 modification seems to play a crucial role in the proofreading step occurring at the peptidyl transferase center and thus would serve to optimize ribosomal fidelity. This is Dual-specificity RNA methyltransferase RlmN from Aromatoleum aromaticum (strain DSM 19018 / LMG 30748 / EbN1) (Azoarcus sp. (strain EbN1)).